Reading from the N-terminus, the 756-residue chain is MSWSPSLPTQTCGAWEMKERLGTGGFGNVIRWHNQETGEQIAIKQCRQELSPRNRERWCLEIQIMRRLNHPNVVAARDVPEGMQSLAPNDLPLLAMEYCQGGDLRKYLNQFENCCGLREGAILTLLSDIASALRYLHENRIIHRDLKPENIVLQQGEQRLIHKIIDLGYAKELDQGSLCTSFVGTLQYLAPELLEQQKYTVTVDYWSFGTLAFECITGFRPFLPNWQPVQWHSKVRQKSEMDIVVSEDLNGAVKFSSSLPHPNNLNSVLAQRLEKWLQLMLMWHPRQRGTDPVYGPNGCFKALDDILNLKLLHVLNMVTGTLHTYPVTEDESLQSLKARIRQDTGILEEDQELLQEAGLALIPDKPAAQCLSDGKLNEGRTLDMDLVFLFDNSRVTYESQVSPQPQPESVSCILQEPKRNLPFFQLRKVWGQVWHSIQALKEDCSRLQQGQRAAMMNLLRNNSCLSKMKNSMASMSQQLKAKLDFFKTSIQIDLEKYREQTEFGITSDKLLLAWREMEQAVELCGRENEVKHLVERMMALQTDIVDLQRSPMGRKQGGTLDDLEEQARELYRRLREKPRDQRTDGDSQEMVRLLLQAIQGFEKKVRVIYTQLSKTVVCKQKALELLPKVEEVVSLMSEDEKMVVRLQEKRQKELWNLLKIACSKVRGPVSGSPDSMNASRLSHPCQLMSQPCTAPDSLPEAAEKSEDLVAEAHTLCTQLENALQDTMKEQDQSLRSLDWSWLQSEEEEQQSLERAS.

A Protein kinase domain is found at 15–300 (WEMKERLGTG…DPVYGPNGCF (286 aa)). ATP is bound by residues 21–29 (LGTGGFGNV) and Lys44. Asp145 acts as the Proton acceptor in catalysis. Lys163 participates in a covalent cross-link: Glycyl lysine isopeptide (Lys-Gly) (interchain with G-Cter in ubiquitin). Ser177 bears the Phosphoserine; by TBK1 and PKC/PRKCZ mark. Cys179 bears the S-nitrosocysteine mark. Ser181 carries the post-translational modification Phosphoserine; by TBK1, PKC/PRKCZ and PDPK1. A Hydroxyproline modification is found at Pro191. Residues 458 to 479 (LLRNNSCLSKMKNSMASMSQQL) form a leucine-zipper region. A phosphoserine; by autocatalysis mark is found at Ser670, Ser672, Ser675, Ser682, Ser689, Ser697, Ser705, Ser733, and Ser740. The tract at residues 737–742 (LDWSWL) is NEMO-binding.

The protein belongs to the protein kinase superfamily. Ser/Thr protein kinase family. I-kappa-B kinase subfamily. As to quaternary structure, component of the I-kappa-B-kinase (IKK) core complex consisting of CHUK, IKBKB and IKBKG; probably four alpha/CHUK-beta/IKBKB dimers are associated with four gamma/IKBKG subunits. The IKK core complex seems to associate with regulatory or adapter proteins to form a IKK-signalosome holo-complex. The IKK complex associates with TERF2IP/RAP1, leading to promote IKK-mediated phosphorylation of RELA/p65. Part of a complex composed of NCOA2, NCOA3, CHUK/IKKA, IKBKB, IKBKG and CREBBP. Part of a 70-90 kDa complex at least consisting of CHUK/IKKA, IKBKB, NFKBIA, RELA, ELP1 and MAP3K14. Found in a membrane raft complex, at least composed of BCL10, CARD11, DPP4 and IKBKB. Interacts with SQSTM1 through PRKCZ or PRKCI. Forms an NGF-induced complex with IKBKB, PRKCI and TRAF6. May interact with MAVS/IPS1. Interacts with NALP2. Interacts with TICAM1. Interacts with FAF1; the interaction disrupts the IKK complex formation. Interacts with ATM. Part of a ternary complex consisting of TANK, IKBKB and IKBKG. Interacts with NIBP; the interaction is direct. Interacts with ARRB1 and ARRB2. Interacts with TRIM21. Interacts with NLRC5; prevents IKBKB phosphorylation and kinase activity. Interacts with PDPK1. Interacts with EIF2AK2/PKR. The phosphorylated form interacts with PPM1A and PPM1B. Interacts with ZNF268; the interaction is further increased in a TNF-alpha-dependent manner. Interacts with IKBKE. Interacts with ZC3H12A. Interacts with AKAP13. Interacts with IFIT5; the interaction synergizes the recruitment of IKK to MAP3K7 and enhances IKK phosphorylation. Interacts with LRRC14; disrupts IKBKB-IKBKG interaction preventing I-kappa-B-kinase (IKK) core complex formation and leading to a decrease of IKBKB phosphorylation and NF-kappaB activation. Interacts with SASH1. Interacts with ARFIP2. Interacts with FKBP5. Upon cytokine stimulation, phosphorylated on Ser-177 and Ser-181 by MEKK1 and/or MAP3K14/NIK as well as TBK1 and PRKCZ; which enhances activity. Phosphorylated by MAP3K7/TAK1 in response to NOD1 and NOD2 signaling, promoting activation and phosphorylation of NF-kappa-B inhibitors, leading to NF-kappa-B activation. Once activated, autophosphorylates on the C-terminal serine cluster; which decreases activity and prevents prolonged activation of the inflammatory response. Phosphorylated by the IKK-related kinases TBK1 and IKBKE, which is associated with reduced CHUK/IKKA and IKBKB activity and NF-kappa-B-dependent gene transcription. Dephosphorylated at Ser-177 and Ser-181 by PPM1A and PPM1B. Post-translationally, ubiquitinated. Monoubiquitination involves TRIM21 that leads to inhibition of Tax-induced NF-kappa-B signaling. 'Ser-163' may not serve as a monoubiquitination site. Ubiquitination on 'Ser-163' may modulate phosphorylation on C-terminal serine residues. In terms of processing, hydroxylated by PHD1/EGLN2, loss of hydroxylation under hypoxic conditions results in activation of NF-kappa-B.

It localises to the cytoplasm. It is found in the nucleus. Its subcellular location is the membrane raft. It catalyses the reaction L-seryl-[I-kappa-B protein] + ATP = O-phospho-L-seryl-[I-kappa-B protein] + ADP + H(+). The catalysed reaction is L-seryl-[protein] + ATP = O-phospho-L-seryl-[protein] + ADP + H(+). The enzyme catalyses L-threonyl-[protein] + ATP = O-phospho-L-threonyl-[protein] + ADP + H(+). Functionally, serine kinase that plays an essential role in the NF-kappa-B signaling pathway which is activated by multiple stimuli such as inflammatory cytokines, bacterial or viral products, DNA damages or other cellular stresses. Acts as a part of the canonical IKK complex in the conventional pathway of NF-kappa-B activation. Phosphorylates inhibitors of NF-kappa-B on 2 critical serine residues. These modifications allow polyubiquitination of the inhibitors and subsequent degradation by the proteasome. In turn, free NF-kappa-B is translocated into the nucleus and activates the transcription of hundreds of genes involved in immune response, growth control, or protection against apoptosis. In addition to the NF-kappa-B inhibitors, phosphorylates several other components of the signaling pathway including NEMO/IKBKG, NF-kappa-B subunits RELA and NFKB1, as well as IKK-related kinases TBK1 and IKBKE. IKK-related kinase phosphorylations may prevent the overproduction of inflammatory mediators since they exert a negative regulation on canonical IKKs. Phosphorylates FOXO3, mediating the TNF-dependent inactivation of this pro-apoptotic transcription factor. Also phosphorylates other substrates including NAA10, NCOA3, BCL10 and IRS1. Phosphorylates RIPK1 at 'Ser-25' which represses its kinase activity and consequently prevents TNF-mediated RIPK1-dependent cell death. Phosphorylates the C-terminus of IRF5, stimulating IRF5 homodimerization and translocation into the nucleus. In Bos taurus (Bovine), this protein is Inhibitor of nuclear factor kappa-B kinase subunit beta (IKBKB).